A 180-amino-acid chain; its full sequence is tRNA (cytidine(56)-2'-O)-methyltransferase (180 aa).

L85 contributes to the S-adenosyl-L-methionine binding site.

Belongs to the aTrm56 family. Homodimer.

The protein resides in the cytoplasm. It carries out the reaction cytidine(56) in tRNA + S-adenosyl-L-methionine = 2'-O-methylcytidine(56) in tRNA + S-adenosyl-L-homocysteine + H(+). Specifically catalyzes the AdoMet-dependent 2'-O-ribose methylation of cytidine at position 56 in tRNAs. The protein is tRNA (cytidine(56)-2'-O)-methyltransferase of Methanobrevibacter smithii (strain ATCC 35061 / DSM 861 / OCM 144 / PS).